Reading from the N-terminus, the 401-residue chain is MIRNIKVEHLHETPIEKQETELVERKGVGHPDSISDGLAEAVSRALCKEYIDKCGAILHHNTDETQIVAGRSRPEFGGGEVLKPIYTLLVGRATMEFDGMEIPAETVALQAAREYVRNTIPAMDLERDMIIDCKLGTGSSDLRDVFTRDHVPMANDTSFGVGHAPFSELEQVVYNTERQLLTDLKKKKIPGIGEDIKVMGLRENNDISLTICCGMVGRHIDDMDHYINAKEEMTEYVLDLATKYTDRTVSARINAADKVDGGCDCVFLTVTGTSAEMGDDGSVGRGNRSNGLITPSRPMSMEATSGKNPINHIGKIYNLLSTQMARDVVSAVDEVSDVHIKLLSQIGMPIDQPLVASAQVIPEDGANFAHIQSEAVVVIDDWLENITKITDMVVKGELDTF.

136–141 (GTGSSD) is an ATP binding site. The interval 278 to 305 (GDDGSVGRGNRSNGLITPSRPMSMEATS) is disordered.

Belongs to the AdoMet synthase 2 family. It depends on Mg(2+) as a cofactor.

It catalyses the reaction L-methionine + ATP + H2O = S-adenosyl-L-methionine + phosphate + diphosphate. It functions in the pathway amino-acid biosynthesis; S-adenosyl-L-methionine biosynthesis; S-adenosyl-L-methionine from L-methionine: step 1/1. In terms of biological role, catalyzes the formation of S-adenosylmethionine from methionine and ATP. In Methanococcoides burtonii (strain DSM 6242 / NBRC 107633 / OCM 468 / ACE-M), this protein is S-adenosylmethionine synthase.